The chain runs to 623 residues: MGGSSRRQRSTSATRRDDKRRRRQCFSSVADDEEETTSIYGVSSIFIWILATSSLILVISSPSSNTSIQSSSYDRITTKHLLDNISPTFKMYTDSNNRNFDEVNHQHQQEQDFNGQSKYDYPQFNRPMGLRWRDDQRMMEYFMSNGPVETVPVMPILTEHPPASPFGRGPSTERPTTSSRYEYSSPSLEDIDLIDVLWRSDIAGEKGTRQVAPADQYECDLQTLTEKSTVAPLTAEENARYEDLSKGFYNGFFESFNNNQYQQKHQQQQREQIKTPTLEHPTQKAELEDDLFDEDLAQLFEDVSREEGQLNQLFDNKQQHPVINNVSLSEGIVYNQANLTEMQEMRDSCNQVSISTIPTTSTAQPETLFNVTDSQTVEQWLPTEVVPNDVFPTSNYAYIGMQNDSLQAVVSNGQIDYDHSYQSTGQTPLSPLIIGSSGRQQQTQTSPGSVTVTATATQSLFDPYHSQRHSFSDCTTDSSSTCSRLSSESPRYTSESSTGTHESRFYGKLAPSSGSRYQRSSSPRSSQSSIKIARVVPLASGQRKRGRQSKDEQLASDNELPVSAFQISEMSLSELQQVLKNESLSEYQRQLIRKIRRRGKNKVAARTCRQRRTDRHDKMSHYI.

4 disordered regions span residues 1 to 29 (MGGSSRRQRSTSATRRDDKRRRRQCFSSV), 158 to 184 (TEHPPASPFGRGPSTERPTTSSRYEYS), 421 to 451 (YQSTGQTPLSPLIIGSSGRQQQTQTSPGSVT), and 467 to 557 (QRHS…LASD). Residue Ser-164 is modified to Phosphoserine; by pmk-1. The span at 173–184 (ERPTTSSRYEYS) shows a compositional bias: polar residues. Phosphoserine; by pmk-1 is present on Ser-430. Composition is skewed to low complexity over residues 435–449 (GSSGRQQQTQTSPGS), 472–498 (SDCTTDSSSTCSRLSSESPRYTSESST), and 511–529 (PSSGSRYQRSSSPRSSQSS). Residues 540–623 (SGQRKRGRQS…DRHDKMSHYI (84 aa)) are basic motif.

This sequence belongs to the bZIP family. Skn1 subfamily. In terms of assembly, monomer. Interacts with GATA factor elt-3; interaction may enhance transcriptional activation of target genes. As to quaternary structure, interacts with pgma-5. Interacts with transcription factor mxl-3 (via N-terminus). In terms of processing, cleaved by the aspartic protease ddi-1. As to expression, postembryonic intestinal cells.

It localises to the nucleus. Its subcellular location is the cytoplasm. The protein localises to the mitochondrion. Its function is as follows. Transcription factor. Required to specify the fate of ventral blastomeres in the early embryo, and postembryonically for the development of the intestine. Directly regulates expression of zygotically expressed med-1 and med-2 to direct mesendoderm development. In response to oxidative stress and anoxia, required to up-regulate expression of stl-1 mRNA. Involved in regulating innate immunity, acting downstream of the pmk-1 p38/MAPK pathway and probably also downstream of nipi-3. Required for the up-regulation of phase II detoxification genes, including gcs-1 and several glutathione-S-transferase mRNAs in response to oxidative stress generated during pathogenic bacterial infection. Modulates oxidative stress responses in concert with transcription factors such as hcf-1 and elt-3. Regulates the transcription of genes associated with metabolism in response to changes in nutrient availability. In neurons, involved in mitochondrial fusion and behavioral recovery during reoxygenation. Required for riok-1 mRNA expression in the intestine. Downstream of the let-60/Ras, mek-2 and pmk-1 pathway, positively regulates lifespan probably by preventing transcription of insulin-like peptides such as ins-39. Prevents degeneration of dopaminergic CEP neurons in response to high Al(3+) or Mn(2+) levels, probably by promoting the expression of glutathione-S-transferase gst-1. Directed by the ER-associated degradation pathway (ERAD), mediates proteasomal homeostasis by regulating the expression of proteasomal subunits such as rpt-3 to confer resistance to proteasomal dysfunction. The protein is Protein skinhead-1 (skn-1) of Caenorhabditis elegans.